A 459-amino-acid chain; its full sequence is MKEFDTIAAIATNLGESGVSIIRVSGDKALSIVSSIFTGKNDRKLDDIRTYSMRYGFIIDKDTKEKLDEVIVSYMKGPRSFTAEDVVEINCHGGVVVTKRILEEVVAAGARLASPGEFTKRAFLNGRIDLSQAEAVIDLINAKTELSAKSALEQSEGKLSREIGKIRNKLLEIIASIEATVDYPEDDLEEVTSEKGRESVSKLLDEIDSLLDHADEGKILREGLNTVIVGKPNVGKSSLLNALLMETRAIVTDVPGTTRDVIEEYMSIDGIPIKIIDTAGIRDTDDVVEKIGVEKSREKINNSDLTVLVLDNSRGLDDEDKEIINFIKDKKYIVLLNKMDLESKIDKEALKELNSKYIIEISAKTGSGLDKFKEVIKELFFSGKVASKDVMITNTRHKEALIRAKESLEASKNALDNTFAIDLASIDLRNAWKSLGEINGDTVEEDIIDKIFSKFCLGK.

Positions 23, 88, and 127 each coordinate (6S)-5-formyl-5,6,7,8-tetrahydrofolate. A TrmE-type G domain is found at 223-381 (GLNTVIVGKP…FKEVIKELFF (159 aa)). Asparagine 233 serves as a coordination point for K(+). GTP is bound by residues 233-238 (NVGKSS), 252-258 (TDVPGTT), and 277-280 (DTAG). Serine 237 provides a ligand contact to Mg(2+). Threonine 252, valine 254, and threonine 257 together coordinate K(+). A Mg(2+)-binding site is contributed by threonine 258. A (6S)-5-formyl-5,6,7,8-tetrahydrofolate-binding site is contributed by lysine 459.

The protein belongs to the TRAFAC class TrmE-Era-EngA-EngB-Septin-like GTPase superfamily. TrmE GTPase family. In terms of assembly, homodimer. Heterotetramer of two MnmE and two MnmG subunits. Requires K(+) as cofactor.

The protein resides in the cytoplasm. Its function is as follows. Exhibits a very high intrinsic GTPase hydrolysis rate. Involved in the addition of a carboxymethylaminomethyl (cmnm) group at the wobble position (U34) of certain tRNAs, forming tRNA-cmnm(5)s(2)U34. This is tRNA modification GTPase MnmE from Clostridium novyi (strain NT).